The following is a 437-amino-acid chain: Doublesex- and mab-3-related transcription factor A2 (437 aa).

A DNA-binding region (DM) is located at residues 49-96 (CARCRNHGVVSALKGHKRYCRWKDCMCAKCTLIAERQRVMAAQVALRR). Disordered stretches follow at residues 163–254 (SVTP…ARQR) and 297–317 (DKSEETWSRDGALPSIQPSVS). Low complexity-rich tracts occupy residues 179–201 (SESVSGSAPGASSPEARPGSGSE) and 223–235 (SPSSISPLGSESG). The region spanning 254–289 (RTPIDILTRVFPAQKRSVLELVLQGCGGDVVQAIEQ) is the DMA domain.

Belongs to the DMRT family.

The protein resides in the nucleus. Functionally, may be involved in sexual development. This Xenopus tropicalis (Western clawed frog) protein is Doublesex- and mab-3-related transcription factor A2 (dmrta2).